Consider the following 193-residue polypeptide: Putative nitroreductase HBN1 (193 aa).

Ser2 bears the N-acetylserine mark.

Belongs to the nitroreductase family. FMN serves as cofactor.

It is found in the cytoplasm. It localises to the nucleus. This Saccharomyces cerevisiae (strain ATCC 204508 / S288c) (Baker's yeast) protein is Putative nitroreductase HBN1 (HBN1).